Reading from the N-terminus, the 179-residue chain is ATP-dependent protease subunit HslV (179 aa).

Residue Thr-7 is part of the active site. Na(+) contacts are provided by Ala-163, Cys-166, and Thr-169.

It belongs to the peptidase T1B family. HslV subfamily. In terms of assembly, a double ring-shaped homohexamer of HslV is capped on each side by a ring-shaped HslU homohexamer. The assembly of the HslU/HslV complex is dependent on binding of ATP.

It is found in the cytoplasm. The catalysed reaction is ATP-dependent cleavage of peptide bonds with broad specificity.. With respect to regulation, allosterically activated by HslU binding. In terms of biological role, protease subunit of a proteasome-like degradation complex believed to be a general protein degrading machinery. The protein is ATP-dependent protease subunit HslV of Amoebophilus asiaticus (strain 5a2).